The primary structure comprises 452 residues: Tryptophan biosynthesis protein TrpCF (452 aa).

Positions 1–253 are indole-3-glycerol phosphate synthase; sequence MPSVLENILK…KACIKLILGE (253 aa). An N-(5'-phosphoribosyl)anthranilate isomerase region spans residues 254–448; that stretch reads NKVCGLTRIK…KDKIKQLARI (195 aa).

In the N-terminal section; belongs to the TrpC family. It in the C-terminal section; belongs to the TrpF family.

It catalyses the reaction N-(5-phospho-beta-D-ribosyl)anthranilate = 1-(2-carboxyphenylamino)-1-deoxy-D-ribulose 5-phosphate. The catalysed reaction is 1-(2-carboxyphenylamino)-1-deoxy-D-ribulose 5-phosphate + H(+) = (1S,2R)-1-C-(indol-3-yl)glycerol 3-phosphate + CO2 + H2O. It participates in amino-acid biosynthesis; L-tryptophan biosynthesis; L-tryptophan from chorismate: step 3/5. The protein operates within amino-acid biosynthesis; L-tryptophan biosynthesis; L-tryptophan from chorismate: step 4/5. Bifunctional enzyme that catalyzes two sequential steps of tryptophan biosynthetic pathway. The first reaction is catalyzed by the isomerase, coded by the TrpF domain; the second reaction is catalyzed by the synthase, coded by the TrpC domain. This is Tryptophan biosynthesis protein TrpCF (trpC) from Helicobacter pylori (strain J99 / ATCC 700824) (Campylobacter pylori J99).